We begin with the raw amino-acid sequence, 341 residues long: Fructose-1,6-bisphosphatase class 1 1 (341 aa).

Residues E92, D114, L116, and D117 each contribute to the Mg(2+) site. Substrate is bound by residues 117 to 120 (DGSS), N209, and K275. E281 contributes to the Mg(2+) binding site.

This sequence belongs to the FBPase class 1 family. In terms of assembly, homotetramer. Requires Mg(2+) as cofactor.

It is found in the cytoplasm. The catalysed reaction is beta-D-fructose 1,6-bisphosphate + H2O = beta-D-fructose 6-phosphate + phosphate. The protein operates within carbohydrate biosynthesis; gluconeogenesis. The chain is Fructose-1,6-bisphosphatase class 1 1 from Leptothrix cholodnii (strain ATCC 51168 / LMG 8142 / SP-6) (Leptothrix discophora (strain SP-6)).